Reading from the N-terminus, the 222-residue chain is uncharacterized protein (222 aa).

Positions 1–20 (MRTTSFAKVAALCGLLALSG) are cleaved as a signal peptide. Cys-21 carries N-palmitoyl cysteine lipidation. Cys-21 carries the S-diacylglycerol cysteine lipid modification.

It localises to the cell membrane. This is an uncharacterized protein from Escherichia coli O157:H7.